A 509-amino-acid chain; its full sequence is ATP synthase subunit alpha (509 aa).

Position 169–176 (169–176) interacts with ATP; sequence GDRQTGKT.

This sequence belongs to the ATPase alpha/beta chains family. As to quaternary structure, F-type ATPases have 2 components, CF(1) - the catalytic core - and CF(0) - the membrane proton channel. CF(1) has five subunits: alpha(3), beta(3), gamma(1), delta(1), epsilon(1). CF(0) has three main subunits: a(1), b(2) and c(9-12). The alpha and beta chains form an alternating ring which encloses part of the gamma chain. CF(1) is attached to CF(0) by a central stalk formed by the gamma and epsilon chains, while a peripheral stalk is formed by the delta and b chains.

The protein localises to the cell inner membrane. It catalyses the reaction ATP + H2O + 4 H(+)(in) = ADP + phosphate + 5 H(+)(out). Produces ATP from ADP in the presence of a proton gradient across the membrane. The alpha chain is a regulatory subunit. In Brucella suis biovar 1 (strain 1330), this protein is ATP synthase subunit alpha.